The chain runs to 107 residues: Integration host factor subunit alpha (107 aa).

The protein belongs to the bacterial histone-like protein family. Heterodimer of an alpha and a beta chain.

Functionally, this protein is one of the two subunits of integration host factor, a specific DNA-binding protein that functions in genetic recombination as well as in transcriptional and translational control. In Bartonella tribocorum (strain CIP 105476 / IBS 506), this protein is Integration host factor subunit alpha.